A 321-amino-acid polypeptide reads, in one-letter code: tRNA 2-thiolation protein NcsA (321 aa).

A Glycyl lysine isopeptide (Lys-Gly) (interchain with G-Cter in SAMP2) cross-link involves residue lysine 204.

Belongs to the TtcA family. CTU1/NCS6/ATPBD3 subfamily. In terms of assembly, interacts with monomeric and polymeric forms of SAMP2. Interacts with UbaA. Interacts with archaeal EF-1-alpha and Pan1. Non-sampylated protein forms a complex with archaeal CPSF1 of approximately 100 kDa. Sampylated at Lys-204 with the archaeal ubiquitin-like protein SAMP2. Polymeric chains of SAMP2 are also linked.

Its pathway is tRNA modification; 5-methoxycarbonylmethyl-2-thiouridine-tRNA biosynthesis. Functionally, required for thiolation of mcm(5)S(2)U at the wobble uridine position of tRNA specific for lysine (tRNA(Lys)). Probably acts by catalyzing adenylation of tRNA, an intermediate required for 2-thiolation. May also act as a sulfurtransferase that transfers sulfur from thiocarboxylated SAMP2 onto the uridine of tRNA at wobble position. Required for cell growth at elevated temperatures. The protein is tRNA 2-thiolation protein NcsA of Haloferax volcanii (strain ATCC 29605 / DSM 3757 / JCM 8879 / NBRC 14742 / NCIMB 2012 / VKM B-1768 / DS2) (Halobacterium volcanii).